The chain runs to 59 residues: MAVQQNKKSPSKRGMHRAHDFLTDPPLAVEPTTGEVHLRHHISPSGVYRGKKVVKAKGE.

Residues 1 to 28 form a disordered region; the sequence is MAVQQNKKSPSKRGMHRAHDFLTDPPLA.

The protein belongs to the bacterial ribosomal protein bL32 family.

The protein is Large ribosomal subunit protein bL32 of Aromatoleum aromaticum (strain DSM 19018 / LMG 30748 / EbN1) (Azoarcus sp. (strain EbN1)).